Reading from the N-terminus, the 155-residue chain is Large ribosomal subunit protein uL13 (155 aa).

This sequence belongs to the universal ribosomal protein uL13 family. Part of the 50S ribosomal subunit.

Functionally, this protein is one of the early assembly proteins of the 50S ribosomal subunit, although it is not seen to bind rRNA by itself. It is important during the early stages of 50S assembly. The polypeptide is Large ribosomal subunit protein uL13 (Rickettsia bellii (strain OSU 85-389)).